Here is an 803-residue protein sequence, read N- to C-terminus: Palmitoyl thioesterase CPT1C (803 aa).

Topologically, residues 1 to 52 are cytoplasmic; that stretch reads MAEAHQAVGFRPSLTSDGAEVELSAPVLQEIYLSGLRSWKRHLSRFWNDFLT. The helical transmembrane segment at 53–75 threads the bilayer; it reads GVFPASPLSWLFLFSAIQLAWFL. The Lumenal portion of the chain corresponds to 76–103; that stretch reads QLDPSLGLMEKIKELLPDWGGQHHGLRG. The helical transmembrane segment at 104 to 126 threads the bilayer; the sequence is VLAAALFASCLWGALIFTLHVAL. Residues 127–803 lie on the Cytoplasmic side of the membrane; sequence RLLLSYHGWL…SKASMTSTDF (677 aa). Histidine 470 acts as the Proton acceptor in catalysis. Residue 552–564 coordinates CoA; it reads GKSFIRRCHLSSD. The (R)-carnitine site is built by tyrosine 586, serine 588, and threonine 599. Positions 761 to 803 are required for interaction with GRIA1; the sequence is LFQAGQHFKRRFRGSGKENSRHRCGFLSRQTGASKASMTSTDF. Residues 772 to 803 are disordered; sequence FRGSGKENSRHRCGFLSRQTGASKASMTSTDF. The segment covering 788-803 has biased composition (polar residues); it reads SRQTGASKASMTSTDF.

This sequence belongs to the carnitine/choline acetyltransferase family. Peripherally associated with AMPAR complex. AMPAR complex consists of an inner core made of 4 pore-forming GluA/GRIA proteins (GRIA1, GRIA2, GRIA3 and GRIA4) and 4 major auxiliary subunits arranged in a twofold symmetry. One of the two pairs of distinct binding sites is occupied either by CNIH2, CNIH3 or CACNG2, CACNG3. The other harbors CACNG2, CACNG3, CACNG4, CACNG8 or GSG1L. This inner core of AMPAR complex is complemented by outer core constituents binding directly to the GluA/GRIA proteins at sites distinct from the interaction sites of the inner core constituents. Outer core constituents include at least PRRT1, PRRT2, CKAMP44/SHISA9, FRRS1L and NRN1. The proteins of the inner and outer core serve as a platform for other, more peripherally associated AMPAR constituents, including CPT1C. Alone or in combination, these auxiliary subunits control the gating and pharmacology of the AMPAR complex and profoundly impact their biogenesis and protein processing. Interacts with SACM1L; the interaction regulates SACM1L phosphatidylinositol-3-phosphatase activity and translocation to endoplasmic reticulum/trans Golgi network in a malonyl-CoA dependent manner. Interacts with ATL1. As to expression, expressed predominantly in brain and testis. Expressed in motor neurons.

The protein localises to the cell projection. It is found in the dendrite. It localises to the axon. Its subcellular location is the endoplasmic reticulum membrane. It carries out the reaction S-hexadecanoyl-L-cysteinyl-[protein] + H2O = L-cysteinyl-[protein] + hexadecanoate + H(+). Palmitoyl thioesterase specifically expressed in the endoplasmic reticulum of neurons. Modulates the trafficking of the glutamate receptor, AMPAR, to plasma membrane through depalmitoylation of GRIA1. Also regulates AMPR trafficking through the regulation of SACM1L phosphatidylinositol-3-phosphatase activity by interaction in a malonyl-CoA dependent manner. Binds malonyl-CoA and couples malonyl-CoA to ceramide levels, necessary for proper spine maturation and contributing to systemic energy homeostasis and appetite control. Binds to palmitoyl-CoA, but does not have carnitine palmitoyltransferase 1 catalytic activity or at very low levels. The chain is Palmitoyl thioesterase CPT1C from Homo sapiens (Human).